The sequence spans 225 residues: Protein-L-isoaspartate O-methyltransferase (225 aa).

Residue Ser-63 is part of the active site.

This sequence belongs to the methyltransferase superfamily. L-isoaspartyl/D-aspartyl protein methyltransferase family.

The protein resides in the cytoplasm. The enzyme catalyses [protein]-L-isoaspartate + S-adenosyl-L-methionine = [protein]-L-isoaspartate alpha-methyl ester + S-adenosyl-L-homocysteine. In terms of biological role, catalyzes the methyl esterification of L-isoaspartyl residues in peptides and proteins that result from spontaneous decomposition of normal L-aspartyl and L-asparaginyl residues. It plays a role in the repair and/or degradation of damaged proteins. The protein is Protein-L-isoaspartate O-methyltransferase of Staphylothermus marinus (strain ATCC 43588 / DSM 3639 / JCM 9404 / F1).